The primary structure comprises 416 residues: 1-deoxy-D-xylulose 5-phosphate reductoisomerase (416 aa).

T10, G11, S12, I13, G36, R37, N38, and N130 together coordinate NADPH. K131 is a binding site for 1-deoxy-D-xylulose 5-phosphate. NADPH is bound at residue E132. Position 156 (D156) interacts with Mn(2+). Residues S157, E158, S194, and H217 each coordinate 1-deoxy-D-xylulose 5-phosphate. E158 contacts Mn(2+). An NADPH-binding site is contributed by G223. Residues S230, N235, K236, and E239 each contribute to the 1-deoxy-D-xylulose 5-phosphate site. E239 lines the Mn(2+) pocket.

The protein belongs to the DXR family. Mg(2+) serves as cofactor. Mn(2+) is required as a cofactor.

It catalyses the reaction 2-C-methyl-D-erythritol 4-phosphate + NADP(+) = 1-deoxy-D-xylulose 5-phosphate + NADPH + H(+). The protein operates within isoprenoid biosynthesis; isopentenyl diphosphate biosynthesis via DXP pathway; isopentenyl diphosphate from 1-deoxy-D-xylulose 5-phosphate: step 1/6. Functionally, catalyzes the NADPH-dependent rearrangement and reduction of 1-deoxy-D-xylulose-5-phosphate (DXP) to 2-C-methyl-D-erythritol 4-phosphate (MEP). The protein is 1-deoxy-D-xylulose 5-phosphate reductoisomerase of Synechococcus sp. (strain CC9311).